The following is an 88-amino-acid chain: Large ribosomal subunit protein eL15 (88 aa).

It belongs to the eukaryotic ribosomal protein eL15 family.

In Brassica napus (Rape), this protein is Large ribosomal subunit protein eL15 (RPL15).